The sequence spans 682 residues: Potassium-transporting ATPase ATP-binding subunit (682 aa).

The next 4 membrane-spanning stretches (helical) occupy residues 34-54 (PVMFIVWIGSLLTTCISIAMA), 62-82 (ALFSAAISGWLWVTVLFANFA), 219-239 (IALTILLIALTIVFLLATATL), and 254-274 (VLVALLVCLIPTTIGGLLSAI). Asp307 (4-aspartylphosphate intermediate) is an active-site residue. ATP contacts are provided by residues Asp344, Glu348, 377–384 (FTAQSRMS), and Lys395. Mg(2+) is bound by residues Asp518 and Asp522. The next 3 helical transmembrane spans lie at 588–608 (FAIIPAAFAATYPQLNALNIM), 616–636 (AILSAVIFNALIIVFLIPLAL), and 656–676 (IYGLGGLLVPFIGIKVIDLLL).

The protein belongs to the cation transport ATPase (P-type) (TC 3.A.3) family. Type IA subfamily. In terms of assembly, the system is composed of three essential subunits: KdpA, KdpB and KdpC.

The protein resides in the cell inner membrane. The enzyme catalyses K(+)(out) + ATP + H2O = K(+)(in) + ADP + phosphate + H(+). Its function is as follows. Part of the high-affinity ATP-driven potassium transport (or Kdp) system, which catalyzes the hydrolysis of ATP coupled with the electrogenic transport of potassium into the cytoplasm. This subunit is responsible for energy coupling to the transport system and for the release of the potassium ions to the cytoplasm. The protein is Potassium-transporting ATPase ATP-binding subunit of Shigella sonnei (strain Ss046).